The chain runs to 244 residues: ATP synthase subunit O, mitochondrial (244 aa).

The N-terminal 45 residues, 1–45, are a transit peptide targeting the mitochondrion; that stretch reads MAMTGRARSMGFSILQKALSSAQRSNAHRSILCPTLSNSELLRNY.

It belongs to the ATPase delta chain family. F-type ATPases have 2 components, CF(1) - the catalytic core - and CF(0) - the membrane proton channel. CF(1) has five subunits: alpha(3), beta(3), gamma(1), delta(1), epsilon(1). CF(0) has three main subunits: a, b and c.

The protein localises to the mitochondrion. It localises to the mitochondrion inner membrane. Its function is as follows. Mitochondrial membrane ATP synthase (F(1)F(0) ATP synthase or Complex V) produces ATP from ADP in the presence of a proton gradient across the membrane which is generated by electron transport complexes of the respiratory chain. F-type ATPases consist of two structural domains, F(1) - containing the extramembraneous catalytic core and F(0) - containing the membrane proton channel, linked together by a central stalk and a peripheral stalk. During catalysis, ATP synthesis in the catalytic domain of F(1) is coupled via a rotary mechanism of the central stalk subunits to proton translocation. Part of the complex F(0) domain and the peripheric stalk, which acts as a stator to hold the catalytic alpha(3)beta(3) subcomplex and subunit a/ATP6 static relative to the rotary elements. The polypeptide is ATP synthase subunit O, mitochondrial (Ipomoea batatas (Sweet potato)).